Reading from the N-terminus, the 223-residue chain is Small ribosomal subunit protein uS3 (223 aa).

The KH type-2 domain occupies 39 to 115 (IRKYIEKNLA…RVFINIVEIK (77 aa)).

It belongs to the universal ribosomal protein uS3 family. As to quaternary structure, part of the 30S ribosomal subunit. Forms a tight complex with proteins S10 and S14.

Binds the lower part of the 30S subunit head. Binds mRNA in the 70S ribosome, positioning it for translation. The protein is Small ribosomal subunit protein uS3 of Leuconostoc citreum (strain KM20).